Reading from the N-terminus, the 416-residue chain is D-amino acid dehydrogenase (416 aa).

Residue 3 to 17 (VIVLGAGIIGVTSAY) participates in FAD binding.

Belongs to the DadA oxidoreductase family. The cofactor is FAD.

The catalysed reaction is a D-alpha-amino acid + A + H2O = a 2-oxocarboxylate + AH2 + NH4(+). Its pathway is amino-acid degradation; D-alanine degradation; NH(3) and pyruvate from D-alanine: step 1/1. Functionally, oxidative deamination of D-amino acids. The protein is D-amino acid dehydrogenase of Sinorhizobium medicae (strain WSM419) (Ensifer medicae).